A 115-amino-acid chain; its full sequence is UPF0102 protein NMB2089 (115 aa).

This sequence belongs to the UPF0102 family.

In Neisseria meningitidis serogroup B (strain ATCC BAA-335 / MC58), this protein is UPF0102 protein NMB2089.